A 93-amino-acid polypeptide reads, in one-letter code: Early nodulin-36B (93 aa).

The protein is Early nodulin-36B of Glycine max (Soybean).